The sequence spans 309 residues: Ribose-phosphate pyrophosphokinase (309 aa).

Residues 37-39 (DGE) and 96-97 (RQ) each bind ATP. Mg(2+)-binding residues include His130 and Asp169. Lys192 is an active-site residue. Residues Arg194, Asp218, and 222–226 (DTAGT) each bind D-ribose 5-phosphate.

This sequence belongs to the ribose-phosphate pyrophosphokinase family. Class I subfamily. Homohexamer. Requires Mg(2+) as cofactor.

The protein localises to the cytoplasm. It catalyses the reaction D-ribose 5-phosphate + ATP = 5-phospho-alpha-D-ribose 1-diphosphate + AMP + H(+). The protein operates within metabolic intermediate biosynthesis; 5-phospho-alpha-D-ribose 1-diphosphate biosynthesis; 5-phospho-alpha-D-ribose 1-diphosphate from D-ribose 5-phosphate (route I): step 1/1. Involved in the biosynthesis of the central metabolite phospho-alpha-D-ribosyl-1-pyrophosphate (PRPP) via the transfer of pyrophosphoryl group from ATP to 1-hydroxyl of ribose-5-phosphate (Rib-5-P). This chain is Ribose-phosphate pyrophosphokinase, found in Wolinella succinogenes (strain ATCC 29543 / DSM 1740 / CCUG 13145 / JCM 31913 / LMG 7466 / NCTC 11488 / FDC 602W) (Vibrio succinogenes).